The primary structure comprises 189 residues: Interferon alpha-H (189 aa).

The first 23 residues, Met1–Gly23, serve as a signal peptide directing secretion. Intrachain disulfides connect Cys24–Cys122 and Cys52–Cys162.

Belongs to the alpha/beta interferon family.

It is found in the secreted. In terms of biological role, produced by macrophages, IFN-alpha have antiviral activities. Interferon stimulates the production of two enzymes: a protein kinase and an oligoadenylate synthetase. This is Interferon alpha-H (IFNAH) from Bos taurus (Bovine).